A 379-amino-acid chain; its full sequence is Intracellular hyaluronan-binding protein 4.S (379 aa).

Disordered regions lie at residues 52–260 (THRK…FSQE) and 332–379 (SLAR…PALA). Residues 71–81 (GKKESQKDRKA) show a composition bias toward basic and acidic residues. Polar residues predominate over residues 107-116 (KVTQNENVDS). Basic and acidic residues-rich tracts occupy residues 118–133 (VKVD…REVR) and 139–158 (RSAE…DKQM). Positions 162–174 (GGRGGMRGRGRGG) are enriched in gly residues. Positions 179-208 (TESDNLRGKREFDRHSGSDRARMRPEDKRG) are enriched in basic and acidic residues. Composition is skewed to acidic residues over residues 232-241 (EQVETTETEA) and 368-379 (NPDDPEDFPALA).

This sequence belongs to the SERBP1-HABP4 family. Associates with ribosomes; promoting ribosome stabilization. Interacts with eef2/eEF2; promoting ribosome stabilization.

The protein resides in the nucleus. Its subcellular location is the cytoplasm. It localises to the stress granule. It is found in the nucleolus. The protein localises to the nucleus speckle. The protein resides in the cajal body. Its function is as follows. Ribosome-binding protein that promotes ribosome hibernation, a process during which ribosomes are stabilized in an inactive state and preserved from proteasomal degradation. Acts via its association with eef2/eEF2 factor at the A-site of the ribosome, promoting ribosome stabilization in an inactive state compatible with storage. Plays a key role in ribosome hibernation in the mature egg by promoting ribosome stabilization. Ribosomes, which are produced in large quantities during oogenesis, are stored and translationally repressed in the egg and early embryo. This chain is Intracellular hyaluronan-binding protein 4.S, found in Xenopus laevis (African clawed frog).